The sequence spans 214 residues: Putative F-box protein At3g58910 (214 aa).

The F-box domain maps to 1-47 (MDRVSSLPDELLCHILSFLTTKETALTSLLSKREIIPLIKSVVFPTL).

This is Putative F-box protein At3g58910 from Arabidopsis thaliana (Mouse-ear cress).